Reading from the N-terminus, the 666-residue chain is MGQTKSKIKSKYASYLSFIKILLKRGGVKVSTKNLIKLFQIIEQFCPWFPEQGTLDLKDWKRIGKELKQAGRKGNIIPLTVWNDWAIIKAALEPFQTEEDSVSVSDAPGSCLIDCNEKTRKKSQKETESLHCEYVAEPVMAQSTQNVDYNQLQEVIYPETLKLEGKGPELVGPSESKPRGTSPLPAGQVPVTLQPQKQVKENKTQPPVAYQYWPPAELQYRPPPESQYGYPGMPPAPQGRAPYPQPPTRRLNPTAPPSRQGSELHEIIDKSRKEGDTEAWQFPVTLEPMPPGEGAQEGEPPTVEARYKSFSIKMLKDMKEGVKQYGPNSPYMRTLLDSIAYGHRLIPYDWEILAKSSLSPSQFLQFKTWWIDGVQEQVRRNRAANPPVNIDADQLLGIGQNWSTISQQALMQNEAIEQVRAICLRAWEKIQDPGSACPSFNTVRQGSKEPYPDFVARLQDVAQKSIADEKARKVIVELMAYENANPECQSAIKPLKGKVPAGSDVISEYVKACDGIGGAMHKAMLMAQAITGVVLGGQVRTFGGKCYNCGQIGHLKKNCPVLNKQNITIQATTTGREPPDLCPRCKKGKHWASQCRSKFDKNGQPLSGNEQRGQPQAPQQTGAFPIQPFVPQGFQGQQPPLSQVFQGISQLPQYNNCPLPQAAVQQ.

A lipid anchor (N-myristoyl glycine) is attached at Gly2. The disordered stretch occupies residues Gly165–Leu264. The segment covering Gly232–Pro247 has biased composition (pro residues). 2 CCHC-type zinc fingers span residues Gly544–Val561 and Asp580–Ser597. The segment at Lys598–Leu641 is disordered. Residues Gln604 to Gly622 are compositionally biased toward polar residues. The span at Phe624–Pro640 shows a compositional bias: low complexity.

Belongs to the beta type-B retroviral Gag protein family. HERV class-II K(HML-2) gag subfamily. Myristoylation is essential for retroviral assembly. Alteration of the glycine residue leads to a block in the budding of particles and an accumulation of Gag inside the cell. In terms of processing, specific enzymatic cleavages may yield mature proteins.

It localises to the cell membrane. Functionally, the products of the Gag polyproteins of infectious retroviruses perform highly complex orchestrated tasks during the assembly, budding, maturation, and infection stages of the viral replication cycle. During viral assembly, the proteins form membrane associations and self-associations that ultimately result in budding of an immature virion from the infected cell. Gag precursors also function during viral assembly to selectively bind and package two plus strands of genomic RNA. Endogenous Gag proteins may have kept, lost or modified their original function during evolution. The polypeptide is Endogenous retrovirus group K member 24 Gag polyprotein (ERVK-24) (Homo sapiens (Human)).